Here is a 273-residue protein sequence, read N- to C-terminus: Coiled-coil domain-containing protein 3 (273 aa).

A signal peptide spans 1 to 21 (MPLPLLLAALCLAASPAPARA). The N-linked (GlcNAc...) asparagine glycan is linked to Asn-100. Positions 188–250 (SVQKALFEEE…VNQKLNEKLG (63 aa)) form a coiled coil.

Homodimer. Post-translationally, N-glycosylated. In terms of tissue distribution, expressed in aorta and adipose tissue. Enriched in mature adipocytes. Over-expressed in adipose tissue from either hormonally-induced or nutritionally-regulated obese mice models.

It localises to the secreted. In terms of biological role, negatively regulates TNF-alpha-induced pro-inflammatory response in endothelial cells (ECs) via inhibition of TNF-alpha-induced NF-kappaB activation in ECs. Positively regulates lipid accumulation in adipose cells. The polypeptide is Coiled-coil domain-containing protein 3 (Ccdc3) (Mus musculus (Mouse)).